The following is a 244-amino-acid chain: PHD finger protein ALFIN-LIKE 2 (244 aa).

Basic and acidic residues predominate over residues 137 to 148 (LSDRKHGRDNKS). The disordered stretch occupies residues 137-178 (LSDRKHGRDNKSGADNGSKSRHSGKRANDVQTKTSRPAVVDD). The PHD-type zinc-finger motif lies at 187–239 (ETLCGTCGGRYNANEFWIGCDICERWFHGKCVRITPAKAEHIKHYKCPDCSSS).

Belongs to the Alfin family. In terms of assembly, interacts with H3K4me3 and to a lesser extent with H3K4me2.

The protein resides in the nucleus. Functionally, histone-binding component that specifically recognizes H3 tails trimethylated on 'Lys-4' (H3K4me3), which mark transcription start sites of virtually all active genes. This chain is PHD finger protein ALFIN-LIKE 2, found in Oryza sativa subsp. indica (Rice).